The primary structure comprises 241 residues: 3-dehydroquinate dehydratase (241 aa).

3-dehydroquinate is bound by residues Glu-35–Arg-37 and Arg-70. Catalysis depends on His-133, which acts as the Proton donor/acceptor. Lys-160 functions as the Schiff-base intermediate with substrate in the catalytic mechanism. 3-dehydroquinate contacts are provided by Arg-202 and Gln-225.

It belongs to the type-I 3-dehydroquinase family. Homodimer.

It carries out the reaction 3-dehydroquinate = 3-dehydroshikimate + H2O. It participates in metabolic intermediate biosynthesis; chorismate biosynthesis; chorismate from D-erythrose 4-phosphate and phosphoenolpyruvate: step 3/7. In terms of biological role, involved in the third step of the chorismate pathway, which leads to the biosynthesis of aromatic amino acids. Catalyzes the cis-dehydration of 3-dehydroquinate (DHQ) and introduces the first double bond of the aromatic ring to yield 3-dehydroshikimate. The protein is 3-dehydroquinate dehydratase of Staphylococcus haemolyticus (strain JCSC1435).